Consider the following 206-residue polypeptide: Thiamine-phosphate synthase (206 aa).

Residues 35–39 (QLRDK) and N67 contribute to the 4-amino-2-methyl-5-(diphosphooxymethyl)pyrimidine site. Residues D68 and D87 each coordinate Mg(2+). Residue S106 coordinates 4-amino-2-methyl-5-(diphosphooxymethyl)pyrimidine. 132 to 134 (TGT) lines the 2-[(2R,5Z)-2-carboxy-4-methylthiazol-5(2H)-ylidene]ethyl phosphate pocket. K135 is a binding site for 4-amino-2-methyl-5-(diphosphooxymethyl)pyrimidine. Residues G163 and 183–184 (IS) contribute to the 2-[(2R,5Z)-2-carboxy-4-methylthiazol-5(2H)-ylidene]ethyl phosphate site.

It belongs to the thiamine-phosphate synthase family. It depends on Mg(2+) as a cofactor.

It catalyses the reaction 2-[(2R,5Z)-2-carboxy-4-methylthiazol-5(2H)-ylidene]ethyl phosphate + 4-amino-2-methyl-5-(diphosphooxymethyl)pyrimidine + 2 H(+) = thiamine phosphate + CO2 + diphosphate. The enzyme catalyses 2-(2-carboxy-4-methylthiazol-5-yl)ethyl phosphate + 4-amino-2-methyl-5-(diphosphooxymethyl)pyrimidine + 2 H(+) = thiamine phosphate + CO2 + diphosphate. The catalysed reaction is 4-methyl-5-(2-phosphooxyethyl)-thiazole + 4-amino-2-methyl-5-(diphosphooxymethyl)pyrimidine + H(+) = thiamine phosphate + diphosphate. Its pathway is cofactor biosynthesis; thiamine diphosphate biosynthesis; thiamine phosphate from 4-amino-2-methyl-5-diphosphomethylpyrimidine and 4-methyl-5-(2-phosphoethyl)-thiazole: step 1/1. In terms of biological role, condenses 4-methyl-5-(beta-hydroxyethyl)thiazole monophosphate (THZ-P) and 2-methyl-4-amino-5-hydroxymethyl pyrimidine pyrophosphate (HMP-PP) to form thiamine monophosphate (TMP). The polypeptide is Thiamine-phosphate synthase (Methanospirillum hungatei JF-1 (strain ATCC 27890 / DSM 864 / NBRC 100397 / JF-1)).